The sequence spans 79 residues: RNA-binding protein Hfq (79 aa).

Residues 10–69 (DPFLNALRKEHVPVSIYLVNGIKLQGNIESFDQYVVLLRNTVTQMVYKHAISTVVPARPV) form the Sm domain.

Belongs to the Hfq family. Homohexamer.

RNA chaperone that binds small regulatory RNA (sRNAs) and mRNAs to facilitate mRNA translational regulation in response to envelope stress, environmental stress and changes in metabolite concentrations. Also binds with high specificity to tRNAs. This Burkholderia mallei (strain ATCC 23344) protein is RNA-binding protein Hfq.